The following is a 366-amino-acid chain: Dof zinc finger protein DOF1.3 (366 aa).

Residues 22 to 103 are disordered; the sequence is DPYSSSSHVL…KTTELKKPDK (82 aa). Low complexity-rich tracts occupy residues 25–45 and 56–69; these read SSSS…SLSL and TDNT…NLNN. Basic and acidic residues-rich tracts occupy residues 70–83 and 91–103; these read ESKE…DQHS and EEEK…KPDK. A Dof-type zinc finger spans residues 105–159; the sequence is LPCPRCNSADTKFCYYNNYNVNQPRHFCRKCQRYWTAGGSMRIVPVGSGRRKNKG. Zn(2+) is bound by residues Cys107, Cys110, Cys132, and Cys135.

It localises to the nucleus. Its function is as follows. Transcription factor that binds specifically to a 5'-AA[AG]G-3' consensus core sequence. The sequence is that of Dof zinc finger protein DOF1.3 (DOF1.3) from Arabidopsis thaliana (Mouse-ear cress).